Here is a 626-residue protein sequence, read N- to C-terminus: Janus kinase and microtubule-interacting protein 1 (626 aa).

The interval 1-25 (MSKKGRSKGDKPEAETDSVQMANEE) is disordered. Positions 1–365 (MSKKGRSKGD…KLKSLTRENV (365 aa)) are mediates association with microtubules. 2 coiled-coil regions span residues 13–255 (EAET…EAER) and 284–413 (ERDV…DDLS). Residues 365–626 (VEMKEKLSAQ…ILFEPKLKFM (262 aa)) form a mediates interaction with TYK2 and GABBR1 region. S382 carries the phosphoserine modification. Over residues 452-461 (ETLSETSYNT) the composition is skewed to polar residues. The interval 452–481 (ETLSETSYNTDRTDRTPATPEEDLDETTTR) is disordered. T470 carries the phosphothreonine modification. The stretch at 490–604 (QLTREYQALQ…EFRVLELEVR (115 aa)) forms a coiled coil.

It belongs to the JAKMIP family. Homodimer. Interacts with JAK1 and TYK2. Forms a complex with GABBR1 and KIF5B/kinesin-1. In terms of processing, phosphorylated.

The protein localises to the cytoplasm. It is found in the cytoskeleton. Its subcellular location is the membrane. In terms of biological role, associates with microtubules and may play a role in the microtubule-dependent transport of the GABA-B receptor. May play a role in JAK1 signaling and regulate microtubule cytoskeleton rearrangements. The chain is Janus kinase and microtubule-interacting protein 1 (Jakmip1) from Mus musculus (Mouse).